The chain runs to 241 residues: Antimicrobial ginkbilobin-2-like protein (241 aa).

An N-terminal signal peptide occupies residues 1 to 23 (MLSSKYISVSFLLLSLSLHAVNC). Gnk2-homologous domains follow at residues 25 to 127 (DPLY…NIDF) and 133 to 238 (NKNK…LYPF). 4 disulfide bridges follow: Cys81–Cys90, Cys93–Cys118, Cys192–Cys201, and Cys204–Cys229. The N-linked (GlcNAc...) asparagine glycan is linked to Asn89.

The protein belongs to the cysteine-rich repeat secretory protein family.

It localises to the secreted. Functionally, possesses antimicrobial activity toward the oomycete Phytophthora cinnamomi (ink disease agent), thus reducing its growth rate and confering an increased resistance to the plant. The protein is Antimicrobial ginkbilobin-2-like protein of Castanea crenata (Japanese chestnut).